An 86-amino-acid chain; its full sequence is Large ribosomal subunit protein bL27 (86 aa).

The disordered stretch occupies residues 1-24 (MAHKKGTGSTRNGRDSNSKRLGVK).

This sequence belongs to the bacterial ribosomal protein bL27 family.

The protein is Large ribosomal subunit protein bL27 of Prochlorococcus marinus (strain AS9601).